The sequence spans 258 residues: Global transcriptional regulator CodY (258 aa).

The tract at residues Met1–Leu156 is GAF domain. A DNA-binding region (H-T-H motif) is located at residues Ala204–Arg223.

The protein belongs to the CodY family.

Its subcellular location is the cytoplasm. DNA-binding global transcriptional regulator which is involved in the adaptive response to starvation and acts by directly or indirectly controlling the expression of numerous genes in response to nutrient availability. During rapid exponential growth, CodY is highly active and represses genes whose products allow adaptation to nutrient depletion. This chain is Global transcriptional regulator CodY, found in Clostridium botulinum (strain ATCC 19397 / Type A).